The chain runs to 240 residues: Probable transcriptional regulatory protein MS53_0373 (240 aa).

The protein belongs to the TACO1 family.

It is found in the cytoplasm. The protein is Probable transcriptional regulatory protein MS53_0373 of Mycoplasmopsis synoviae (strain 53) (Mycoplasma synoviae).